Here is a 144-residue protein sequence, read N- to C-terminus: Protein NrdI (144 aa).

It belongs to the NrdI family.

In terms of biological role, probably involved in ribonucleotide reductase function. The sequence is that of Protein NrdI from Streptococcus pyogenes serotype M4 (strain MGAS10750).